The sequence spans 94 residues: Fungal defensin scedosporisin-2 (94 aa).

A signal peptide spans 1 to 25 (MKFSNISIAALFTILASTAMAAPAA). Positions 26–56 (DSPDSIVAREPAPVEETYEAPSGLEKRGFGC) are excised as a propeptide. Phenylalanine 54, glycine 55, and cysteine 56 together coordinate beta-D-GlcNAc-(1-&gt;4)-Mur2Ac(oyl-L-Ala-gamma-D-Glu-L-Lys-D-Ala-D-Ala)-di-trans,octa-cis-undecaprenyl diphosphate. 3 disulfide bridges follow: cysteine 56-cysteine 78, cysteine 63-cysteine 91, and cysteine 67-cysteine 93. The segment at 57-60 (PGSE) is interaction site with membrane interface. Histidine 66 provides a ligand contact to beta-D-GlcNAc-(1-&gt;4)-Mur2Ac(oyl-L-Ala-gamma-D-Glu-L-Lys-D-Ala-D-Ala)-di-trans,octa-cis-undecaprenyl diphosphate. The interval 83 to 90 (IPFVGRPR) is interaction site with membrane interface. Residue cysteine 91 participates in beta-D-GlcNAc-(1-&gt;4)-Mur2Ac(oyl-L-Ala-gamma-D-Glu-L-Lys-D-Ala-D-Ala)-di-trans,octa-cis-undecaprenyl diphosphate binding.

It belongs to the invertebrate defensin family.

The protein localises to the secreted. It is found in the target cell membrane. Functionally, antibacterial peptide potently active against Gram-positive bacteria. May act by selectively inhibiting peptidoglycan biosynthesis through complex formation with the cell wall precursor lipid II (1:1 molar ratio) thus inhibiting cell wall synthesis. Shows remarkably activity against resistant isolates such as methicillin-resistant Staphylococcus aureus (MRSA) and vancomycin-resistant Enterococci (VRE) at the concentration of micromolar level. Does not act by destroying the membrane integrity, which is consistent with its nonamphiphilic architecture. Acts more rapidly than vancomycin. Shows low hemolysis and cytotoxicity and high serum stability. In vivo, is as efficient as vancomycin to protect mouse peritonitis models from MRSA infections. The protein is Fungal defensin scedosporisin-2 of Pseudallescheria apiosperma (Scedosporium apiospermum).